Reading from the N-terminus, the 249-residue chain is Coproheme decarboxylase (249 aa).

Residues R131, 145-149 (YPMDK), H172, and Q185 each bind Fe-coproporphyrin III. The active site involves Y145.

Belongs to the ChdC family. Type 1 subfamily. The cofactor is Fe-coproporphyrin III.

The catalysed reaction is Fe-coproporphyrin III + 2 H2O2 + 2 H(+) = heme b + 2 CO2 + 4 H2O. It carries out the reaction Fe-coproporphyrin III + H2O2 + H(+) = harderoheme III + CO2 + 2 H2O. The enzyme catalyses harderoheme III + H2O2 + H(+) = heme b + CO2 + 2 H2O. Its pathway is porphyrin-containing compound metabolism; protoheme biosynthesis. Its function is as follows. Involved in coproporphyrin-dependent heme b biosynthesis. Catalyzes the decarboxylation of Fe-coproporphyrin III (coproheme) to heme b (protoheme IX), the last step of the pathway. The reaction occurs in a stepwise manner with a three-propionate intermediate. This Staphylococcus epidermidis (strain ATCC 35984 / DSM 28319 / BCRC 17069 / CCUG 31568 / BM 3577 / RP62A) protein is Coproheme decarboxylase.